The sequence spans 570 residues: MEAPEEPAPVRGGPEATLEVRGSRCLRLSAFREELRALLVLAGPAFLVQLMVFLISFISSVFCGHLGKLELDAVTLAIAVINVTGVSVGFGLSSACDTLISQTYGSQNLKHVGVILQRSALVLLLCCFPCWALFLNTQHILLLFRQDPDVSRLTQTYVTIFIPALPATFLYMLQVKYLLNQGIVLPQIVTGVAANLVNALANYLFLHQLHLGVIGSALANLISQYTLALLLFLYILGKKLHQATWGGWSLECLQDWASFLRLAIPSMLMLCMEWWAYEVGSFLSGILGMVELGAQSIVYELAIIVYMVPAGFSVAASVRVGNALGAGDMEQARKSSTVSLLITVLFAVAFSVLLLSCKDHVGYIFTTDRDIINLVAQVVPIYAVSHLFEALACTSGGVLRGSGNQKVGAIVNTIGYYVVGLPIGIALMFATTLGVMGLWSGIIICTVFQAVCFLGFIIQLNWKKACQQAQVHANLKVNNVPRSGNSALPQDPLHPGCPENLEGILTNDVGKTGEPQSDQQMRQEEPLPEHPQDGAKLSRKQLVLRRGLLLLGVFLILLVGILVRFYVRIQ.

Methionine 1 carries the N-acetylmethionine modification. At methionine 1–alanine 37 the chain is on the cytoplasmic side. A helical transmembrane segment spans residues leucine 38 to isoleucine 58. Residues serine 59–aspartate 72 lie on the Extracellular side of the membrane. A helical membrane pass occupies residues alanine 73–serine 93. The Cytoplasmic portion of the chain corresponds to serine 94–leucine 123. The chain crosses the membrane as a helical span at residues leucine 124–phenylalanine 144. Residues arginine 145–arginine 152 are Extracellular-facing. The chain crosses the membrane as a helical span at residues leucine 153 to leucine 173. Topologically, residues glutamine 174–lysine 176 are cytoplasmic. A helical transmembrane segment spans residues tyrosine 177 to valine 197. Residues asparagine 198–serine 216 lie on the Extracellular side of the membrane. The helical transmembrane segment at alanine 217–glycine 237 threads the bilayer. The Cytoplasmic portion of the chain corresponds to lysine 238–tryptophan 256. A helical membrane pass occupies residues alanine 257–alanine 276. Residues tyrosine 277–glutamine 295 are Extracellular-facing. Residues serine 296–alanine 316 form a helical membrane-spanning segment. Topologically, residues serine 317–serine 336 are cytoplasmic. A helical transmembrane segment spans residues threonine 337–cysteine 357. The Extracellular segment spans residues lysine 358–aspartate 370. The helical transmembrane segment at isoleucine 371–leucine 391 threads the bilayer. The Cytoplasmic portion of the chain corresponds to alanine 392–glycine 408. Residues alanine 409–phenylalanine 429 traverse the membrane as a helical segment. At alanine 430–glycine 437 the chain is on the extracellular side. Residues leucine 438–isoleucine 458 form a helical membrane-spanning segment. The Cytoplasmic portion of the chain corresponds to glutamine 459–arginine 546. Positions aspartate 508–glycine 534 are disordered. The span at methionine 521–aspartate 533 shows a compositional bias: basic and acidic residues. Residues glycine 547–valine 567 form a helical membrane-spanning segment. The Extracellular segment spans residues arginine 568–glutamine 570.

Belongs to the multi antimicrobial extrusion (MATE) (TC 2.A.66.1) family. As to expression, widely expressed. The highest expression is found in adrenal gland, and to a lower extent in liver, skeletal muscle and kidney. In testis, primarily localized throughout the adluminal compartment of the seminiferous tubules with expression at the peritubular myoid cells and Leydig cells.

It localises to the cell membrane. The protein localises to the apical cell membrane. It carries out the reaction thiamine(out) + H(+)(in) = thiamine(in) + H(+)(out). It catalyses the reaction estrone 3-sulfate(in) + H(+)(out) = estrone 3-sulfate(out) + H(+)(in). The catalysed reaction is creatinine(in) + H(+)(out) = creatinine(out) + H(+)(in). The enzyme catalyses agmatine(in) + H(+)(out) = agmatine(out) + H(+)(in). Multidrug efflux pump that functions as a H(+)/organic cation antiporter. Plays a physiological role in the excretion of cationic compounds including endogenous metabolites, drugs, toxins through the kidney and liver, into urine and bile respectively. Mediates the efflux of endogenous compounds such as creatinine, vitamin B1/thiamine, agmatine and estrone-3-sulfate. May also contribute to regulate the transport of cationic compounds in testis across the blood-testis-barrier. In Homo sapiens (Human), this protein is Multidrug and toxin extrusion protein 1.